The sequence spans 628 residues: 69 kDa protein (628 aa).

Disordered regions lie at residues 1–25, 141–332, 346–404, 418–493, and 535–628; these read MSNG…SAPD, HFHA…FRPS, LGHL…LLPN, RGKI…DPVL, and QTVL…PDTD. A compositionally biased stretch (low complexity) spans 299 to 312; sequence PPTTTSRPTGPPSR. Polar residues predominate over residues 320–331; sequence YQSSPHTPNFRP. Residues 434–450 show a composition bias toward pro residues; that stretch reads GAPPPPRRLPSPAPRPQ.

Belongs to the tymoviridae protein p69 family.

Acts as a suppressor of RNA-mediated gene silencing, also known as post-transcriptional gene silencing (PTGS), a mechanism of plant viral defense that limits the accumulation of viral RNAs. The polypeptide is 69 kDa protein (Brassica (Chinese cabbage)).